A 789-amino-acid chain; its full sequence is Aryl hydrocarbon receptor nuclear translocator (789 aa).

The segment covering 1 to 14 has biased composition (polar residues); it reads MAATTANPEMTSDV. The segment at 1–97 is disordered; that stretch reads MAATTANPEM…RLARENHSEI (97 aa). Residue A2 is modified to N-acetylalanine. Residues 26–35 show a composition bias toward gly residues; it reads SGPGIQGGGA. K58 participates in a covalent cross-link: Glycyl lysine isopeptide (Lys-Gly) (interchain with G-Cter in SUMO2). The segment covering 60–97 has biased composition (basic and acidic residues); sequence LRCDDDQMSNDKERFARSDDEQSSADKERLARENHSEI. Phosphoserine is present on S77. The DNA-binding stretch occupies residues 88 to 128; it reads RLARENHSEIERRRRNKMTAYITELSDMVPTCSALARKPDK. One can recognise a bHLH domain in the interval 89–142; that stretch reads LARENHSEIERRRRNKMTAYITELSDMVPTCSALARKPDKLTILRMAVSHMKSL. Positions 112–168 are required for heterodimer formation with HIF1A; sequence LSDMVPTCSALARKPDKLTILRMAVSHMKSLRGTGNTSTDGSYKPSFLTDQELKHLI. A required for heterodimer formation with EPAS1 region spans residues 112–264; the sequence is LSDMVPTCSA…MCMGSRRSFI (153 aa). PAS domains lie at 161-235 and 349-419; these read DQEL…LTGR and PNCT…VKLK. The interval 167–171 is mediates the transcription activity and dimerization of the AHR:ARNT complex; that stretch reads LILEA. Positions 424–467 constitute a PAC domain; that stretch reads SVMFRFRSKNQEWLWMRTSSFTFQNPYSDEIEYIICTNTNVKNS. The segment covering 465-481 has biased composition (polar residues); the sequence is KNSSQEPRPTLSNTIQR. Disordered regions lie at residues 465-492 and 672-789; these read KNSSQEPRPTLSNTIQRPQLGPTANLPL and TPSS…PFSE. Low complexity predominate over residues 672-696; that stretch reads TPSSFSSMSLPGAPTASPGAAAYPS. Over residues 708-719 the composition is skewed to polar residues; the sequence is TGQTAGQFQTRT. 2 stretches are compositionally biased toward low complexity: residues 723–733 and 743–756; these read VGVWPQWQGQQ and QHVQQPPAQQPGQP.

In terms of assembly, monomer. Homodimer only upon binding to a DNA. Efficient DNA binding requires dimerization with another bHLH protein. Interacts with TACC3. Interacts with HIF1A, EPAS1, NPAS1 and NPAS3; forms a heterodimer that binds core DNA sequence 5'-TACGTG-3' within the hypoxia response element (HRE) of target gene promoters. Forms a heterodimer with AHRR, as well as with other bHLH proteins. Interacts with NOCA7. Interacts with TACC3. Interacts with AHR; the heterodimer ARNT:AHR binds to core DNA sequence 5'-TGCGTG-3' within the dioxin response element (DRE) of target gene promoters and activates their transcription. Interacts with SIM1 and NPAS4.

The protein resides in the nucleus. Its function is as follows. Required for activity of the AHR. Upon ligand binding, AHR translocates into the nucleus, where it heterodimerizes with ARNT and induces transcription by binding to xenobiotic response elements (XRE). Not required for the ligand-binding subunit to translocate from the cytosol to the nucleus after ligand binding. The complex initiates transcription of genes involved in the regulation of a variety of biological processes, including angiogenesis, hematopoiesis, drug and lipid metabolism, cell motility and immune modulation. The heterodimer binds to core DNA sequence 5'-TACGTG-3' within the hypoxia response element (HRE) of target gene promoters and functions as a transcriptional regulator of the adaptive response to hypoxia. The heterodimer ARNT:AHR binds to core DNA sequence 5'-TGCGTG-3' within the dioxin response element (DRE) of target gene promoters and activates their transcription. The chain is Aryl hydrocarbon receptor nuclear translocator from Homo sapiens (Human).